Consider the following 271-residue polypeptide: Ferric enterobactin transport ATP-binding protein FepC (271 aa).

An ABC transporter domain is found at 8 to 244 (LRGEQLTLGY…ELIERIYGLR (237 aa)). 40 to 47 (GPNGCGKS) contacts ATP.

This sequence belongs to the ABC transporter superfamily. As to quaternary structure, the complex is composed of two ATP-binding proteins (FepC), two transmembrane proteins (FepD and FepG) and a solute-binding protein (FepB).

It localises to the cell inner membrane. It catalyses the reaction Fe(III)-enterobactin(out) + ATP + H2O = Fe(III)-enterobactin(in) + ADP + phosphate + H(+). Its function is as follows. Part of the ABC transporter complex FepBDGC involved in ferric enterobactin uptake. Responsible for energy coupling to the transport system. This chain is Ferric enterobactin transport ATP-binding protein FepC (fepC), found in Escherichia coli (strain K12).